A 642-amino-acid polypeptide reads, in one-letter code: Tigger transposable element derived 5 (642 aa).

The interval M1–P54 is disordered. The span at P31–R53 shows a compositional bias: pro residues. The 52-residue stretch at A57–L108 folds into the HTH psq-type domain. 2 consecutive DNA-binding regions (H-T-H motif) follow at residues Q84–D104 and P155–R188. The 74-residue stretch at Q122–R195 folds into the HTH CENPB-type domain. The interval S202–Y238 is disordered. The DDE-1 domain maps to D240–V365. 2 disordered regions span residues T375–E400 and G548–G581.

Belongs to the tigger transposable element derived protein family.

It localises to the nucleus. This Mus musculus (Mouse) protein is Tigger transposable element derived 5 (Tigd5).